The chain runs to 568 residues: Acetate--CoA ligase CCL3 (568 aa).

ATP-binding positions include 204-212 (TSGTTASPK), 340-345 (HTYGLS), Asp-437, 449-452 (IKDR), and Lys-547. Residues 272–340 (TAKGVYSAIA…MSEKGFKVAH (69 aa)) are SBD1. Positions 341-417 (TYGLSETYGP…MRGNAVMKGY (77 aa)) are SBD2.

Belongs to the ATP-dependent AMP-binding enzyme family. In terms of tissue distribution, mostly expressed in glandular trichomes (lupulin glands) after flowering and in old leaves, and, to a lower extent, in stems, young leaves, cones and flowers.

The protein resides in the cytoplasm. The protein localises to the cytosol. The catalysed reaction is acetate + ATP + CoA = acetyl-CoA + AMP + diphosphate. The enzyme catalyses propanoate + ATP + CoA = propanoyl-CoA + AMP + diphosphate. It carries out the reaction butanoate + ATP + CoA = butanoyl-CoA + AMP + diphosphate. It catalyses the reaction 3-methylbutanoate + ATP + CoA = 3-methylbutanoyl-CoA + AMP + diphosphate. The catalysed reaction is pentanoate + ATP + CoA = pentanoyl-CoA + AMP + diphosphate. The enzyme catalyses hexanoate + ATP + CoA = hexanoyl-CoA + AMP + diphosphate. It carries out the reaction 2-methylpropanoate + ATP + CoA = 2-methylpropanoyl-CoA + AMP + diphosphate. It catalyses the reaction 2-methylbutanoate + ATP + CoA = 2-methylbutanoyl-CoA + AMP + diphosphate. The catalysed reaction is 2-methylpentanoate + ATP + CoA = 2-methylpentanoyl-CoA + AMP + diphosphate. The enzyme catalyses 3-methylpentanoate + ATP + CoA = 3-methylpentanoyl-CoA + AMP + diphosphate. It carries out the reaction 4-methylpentanoate + ATP + CoA = 4-methylpentanoyl-CoA + AMP + diphosphate. It participates in secondary metabolite biosynthesis. In terms of biological role, involved in the biosynthesis of prenylated phenolics natural products which contribute to the bitter taste of beer and display broad biological activities. Catalyzes the ligation of CoA on propanoate to produce propanoyl-CoA. Can also use 2-methylpropanoate (isobutyric acid), acetate, butanoate, isovalerate, pentanoate, hexanoate, 2-methylbutanoate, 2-methylpentanoate, 3-methylpentanoate and 4-methylpentanoate as substrates with a lower efficiency. Triggers the formation of very short chain acyl-CoAs from the corresponding fatty acids, including acetic acid, propanoic acid, butyric acid and its isomer. In Humulus lupulus (European hop), this protein is Acetate--CoA ligase CCL3.